Consider the following 298-residue polypeptide: Ribosomal RNA small subunit methyltransferase H (298 aa).

S-adenosyl-L-methionine is bound by residues 31-33 (GGH), D50, Y80, D95, and Q102. The interval 255 to 298 (AEKDLYGNTNKPFKSVGKAIDPDDEEKERNNRARSARLRIAERE) is disordered.

The protein belongs to the methyltransferase superfamily. RsmH family.

Its subcellular location is the cytoplasm. The enzyme catalyses cytidine(1402) in 16S rRNA + S-adenosyl-L-methionine = N(4)-methylcytidine(1402) in 16S rRNA + S-adenosyl-L-homocysteine + H(+). Its function is as follows. Specifically methylates the N4 position of cytidine in position 1402 (C1402) of 16S rRNA. In Cytophaga hutchinsonii (strain ATCC 33406 / DSM 1761 / CIP 103989 / NBRC 15051 / NCIMB 9469 / D465), this protein is Ribosomal RNA small subunit methyltransferase H.